Here is a 299-residue protein sequence, read N- to C-terminus: Non-homologous end-joining factor 1 (299 aa).

The interval Met1–Leu135 is globular head. Residues Pro128–Ser170 are a coiled coil. Phosphoserine; by PRKDC is present on residues Ser132, Ser203, Ser245, and Ser251. A C-terminal tail region spans residues Gln224 to Lys288. The segment covering Asn255 to Thr266 has biased composition (polar residues). Residues Asn255 to Ser299 form a disordered region. At Ser263 the chain carries Phosphoserine. At Thr266 the chain carries Phosphothreonine. The residue at position 287 (Ser287) is a Phosphoserine. Over residues Lys288–Ser299 the composition is skewed to basic residues. Positions Val289 to Ser299 match the XLM motif.

It belongs to the XRCC4-XLF family. XLF subfamily. Homodimer; mainly exists as a homodimer when not associated with XRCC4. Interacts with XRCC4; the interaction is direct and is mediated via a head-to-head interaction between N-terminal head regions. Component of the core long-range non-homologous end joining (NHEJ) complex (also named DNA-PK complex) composed of PRKDC, LIG4, XRCC4, XRCC6/Ku70, XRCC5/Ku86 and NHEJ1/XLF. Additional component of the NHEJ complex includes PAXX. Following autophosphorylation, PRKDC dissociates from DNA, leading to formation of the short-range NHEJ complex, composed of LIG4, XRCC4, XRCC6/Ku70, XRCC5/Ku86 and NHEJ1/XLF. Interacts with POLL (DNA polymerase lambda); promoting POLL recruitment to double-strand breaks (DSBs) and stimulation of the end-filling activity of POLL. Post-translationally, phosphorylated by PRKDC at the C-terminus in response to DNA damage. Phosphorylations by PRKDC at the C-terminus of XRCC4 and NHEJ1/XLF are highly redundant and regulate ability of the XRCC4-NHEJ1/XLF subcomplex to bridge DNA. Phosphorylation does not prevent interaction with XRCC4 but disrupts ability to bridge DNA and promotes detachment from DNA. In terms of tissue distribution, ubiquitously expressed.

Its subcellular location is the nucleus. The protein resides in the chromosome. Its function is as follows. DNA repair protein involved in DNA non-homologous end joining (NHEJ); it is required for double-strand break (DSB) repair and V(D)J recombination and is also involved in telomere maintenance. Plays a key role in NHEJ by promoting the ligation of various mismatched and non-cohesive ends. Together with PAXX, collaborates with DNA polymerase lambda (POLL) to promote joining of non-cohesive DNA ends. May act in concert with XRCC5-XRCC6 (Ku) to stimulate XRCC4-mediated joining of blunt ends and several types of mismatched ends that are non-complementary or partially complementary. In some studies, has been shown to associate with XRCC4 to form alternating helical filaments that bridge DNA and act like a bandage, holding together the broken DNA until it is repaired. Alternatively, it has also been shown that rather than forming filaments, a single NHEJ1 dimer interacts through both head domains with XRCC4 to promote the close alignment of DNA ends. The XRCC4-NHEJ1/XLF subcomplex binds to the DNA fragments of a DSB in a highly diffusive manner and robustly bridges two independent DNA molecules, holding the broken DNA fragments in close proximity to one other. The mobility of the bridges ensures that the ends remain accessible for further processing by other repair factors. Binds DNA in a length-dependent manner. The chain is Non-homologous end-joining factor 1 from Homo sapiens (Human).